The following is a 293-amino-acid chain: 4-hydroxy-tetrahydrodipicolinate synthase (293 aa).

Thr-44 serves as a coordination point for pyruvate. The active-site Proton donor/acceptor is Tyr-132. Lys-161 functions as the Schiff-base intermediate with substrate in the catalytic mechanism. Ile-203 is a pyruvate binding site.

It belongs to the DapA family. Homotetramer; dimer of dimers.

Its subcellular location is the cytoplasm. It carries out the reaction L-aspartate 4-semialdehyde + pyruvate = (2S,4S)-4-hydroxy-2,3,4,5-tetrahydrodipicolinate + H2O + H(+). It participates in amino-acid biosynthesis; L-lysine biosynthesis via DAP pathway; (S)-tetrahydrodipicolinate from L-aspartate: step 3/4. Its function is as follows. Catalyzes the condensation of (S)-aspartate-beta-semialdehyde [(S)-ASA] and pyruvate to 4-hydroxy-tetrahydrodipicolinate (HTPA). This Persephonella marina (strain DSM 14350 / EX-H1) protein is 4-hydroxy-tetrahydrodipicolinate synthase.